The primary structure comprises 92 residues: Signal recognition particle 19 kDa protein (92 aa).

It belongs to the SRP19 family. As to quaternary structure, part of the signal recognition particle protein translocation system, which is composed of SRP and FtsY. Archaeal SRP consists of a 7S RNA molecule of 300 nucleotides and two protein subunits: SRP54 and SRP19.

The protein localises to the cytoplasm. Functionally, involved in targeting and insertion of nascent membrane proteins into the cytoplasmic membrane. Binds directly to 7S RNA and mediates binding of the 54 kDa subunit of the SRP. This Haloarcula marismortui (strain ATCC 43049 / DSM 3752 / JCM 8966 / VKM B-1809) (Halobacterium marismortui) protein is Signal recognition particle 19 kDa protein.